The chain runs to 559 residues: Formate--tetrahydrofolate ligase (559 aa).

ATP is bound at residue 68–75; that stretch reads TPAGEGKT.

The protein belongs to the formate--tetrahydrofolate ligase family.

The catalysed reaction is (6S)-5,6,7,8-tetrahydrofolate + formate + ATP = (6R)-10-formyltetrahydrofolate + ADP + phosphate. Its pathway is one-carbon metabolism; tetrahydrofolate interconversion. The polypeptide is Formate--tetrahydrofolate ligase (Mesorhizobium japonicum (strain LMG 29417 / CECT 9101 / MAFF 303099) (Mesorhizobium loti (strain MAFF 303099))).